Here is a 1005-residue protein sequence, read N- to C-terminus: Band 4.1-like protein 2 (1005 aa).

The interval Met-1–Pro-80 is disordered. Thr-2 is modified (N-acetylthreonine). A Phosphoserine modification is found at Ser-7. A compositionally biased stretch (basic and acidic residues) spans Ala-22–Ala-31. Ser-39, Ser-58, and Ser-87 each carry phosphoserine. The residue at position 89 (Thr-89) is a Phosphothreonine. The segment at Ala-93–Glu-196 is disordered. 2 stretches are compositionally biased toward basic and acidic residues: residues Val-111–Ser-157 and Val-169–Glu-196. Residues Lys-140 and Lys-144 each participate in a glycyl lysine isopeptide (Lys-Gly) (interchain with G-Cter in SUMO2) cross-link. Phosphoserine occurs at positions 170, 208, 386, 402, 499, 550, 562, 575, 598, and 614. The 282-residue stretch at Val-218 to Ser-499 folds into the FERM domain. The tract at residues Gln-502 to Gly-610 is hydrophilic. The spectrin--actin-binding stretch occupies residues Lys-611–Ser-676. At Tyr-623 the chain carries Phosphotyrosine. Residues Ser-627 and Ser-647 each carry the phosphoserine modification. Positions Lys-652–Val-800 are disordered. Polar residues predominate over residues Leu-675 to Thr-686. Positions Val-690–Gly-711 are enriched in basic and acidic residues. A phosphoserine mark is found at Ser-715 and Ser-718. Residues Ser-734–Ser-746 are compositionally biased toward low complexity. Basic and acidic residues-rich tracts occupy residues Gly-754–Glu-770 and Glu-780–Ala-793. Phosphothreonine is present on Thr-763. Ser-828 is subject to Phosphoserine. Residues His-855–Asp-1005 form a C-terminal (CTD) region.

Interacts with FCGR1A. Interacts with TRPC4. Interacts (via CTD domain) with FKBP2. Interacts with NUMA1; this interaction is negatively regulated by CDK1 during metaphase and promotes anaphase-specific localization of NUMA1 in symmetrically dividing cells. Widely expressed.

Its subcellular location is the cytoplasm. It is found in the cytoskeleton. The protein localises to the cell cortex. It localises to the cell membrane. In terms of biological role, required for dynein-dynactin complex and NUMA1 recruitment at the mitotic cell cortex during anaphase. The polypeptide is Band 4.1-like protein 2 (Homo sapiens (Human)).